The sequence spans 191 residues: MINNEVSRKYSSALLEVALESDNLSRFKEELEGISKALKQYDDLKKILYHPRVLPDDKKEVIHQVFSDKVSEPVFNFLNLIVDKRREVYLDFIIRDFIKQANRKEGLVKIEVVSAIELSEKQREQLKNKLKKALNKKIELKTKIDPGIIGGIIIKIGDRLIDGSIKHQLDSIKESIEKIPVTELGVIQNES.

It belongs to the ATPase delta chain family. As to quaternary structure, F-type ATPases have 2 components, F(1) - the catalytic core - and F(0) - the membrane proton channel. F(1) has five subunits: alpha(3), beta(3), gamma(1), delta(1), epsilon(1). F(0) has three main subunits: a(1), b(2) and c(10-14). The alpha and beta chains form an alternating ring which encloses part of the gamma chain. F(1) is attached to F(0) by a central stalk formed by the gamma and epsilon chains, while a peripheral stalk is formed by the delta and b chains.

It is found in the cell inner membrane. Its function is as follows. F(1)F(0) ATP synthase produces ATP from ADP in the presence of a proton or sodium gradient. F-type ATPases consist of two structural domains, F(1) containing the extramembraneous catalytic core and F(0) containing the membrane proton channel, linked together by a central stalk and a peripheral stalk. During catalysis, ATP synthesis in the catalytic domain of F(1) is coupled via a rotary mechanism of the central stalk subunits to proton translocation. In terms of biological role, this protein is part of the stalk that links CF(0) to CF(1). It either transmits conformational changes from CF(0) to CF(1) or is implicated in proton conduction. In Halothermothrix orenii (strain H 168 / OCM 544 / DSM 9562), this protein is ATP synthase subunit delta.